We begin with the raw amino-acid sequence, 264 residues long: 3-dehydroquinate dehydratase (264 aa).

3-dehydroquinate contacts are provided by residues 50-52 (EWR) and R86. The active-site Proton donor/acceptor is H148. K175 functions as the Schiff-base intermediate with substrate in the catalytic mechanism. Residues R217, S236, and Q240 each coordinate 3-dehydroquinate.

Belongs to the type-I 3-dehydroquinase family. As to quaternary structure, homodimer.

The catalysed reaction is 3-dehydroquinate = 3-dehydroshikimate + H2O. Its pathway is metabolic intermediate biosynthesis; chorismate biosynthesis; chorismate from D-erythrose 4-phosphate and phosphoenolpyruvate: step 3/7. Functionally, involved in the third step of the chorismate pathway, which leads to the biosynthesis of aromatic amino acids. Catalyzes the cis-dehydration of 3-dehydroquinate (DHQ) and introduces the first double bond of the aromatic ring to yield 3-dehydroshikimate. This Albidiferax ferrireducens (strain ATCC BAA-621 / DSM 15236 / T118) (Rhodoferax ferrireducens) protein is 3-dehydroquinate dehydratase.